The primary structure comprises 200 residues: LIM domain-containing protein WLIM2a (200 aa).

2 consecutive LIM zinc-binding domains span residues 8–68 (QKCR…LFKE) and 107–167 (DKCA…LFKE).

In terms of assembly, interacts with F-actin. As to expression, expressed in roots, leaves, stems, flowers and siliques. Barely detected in pollen.

Its subcellular location is the cytoplasm. The protein localises to the cytoskeleton. Functionally, binds to actin filaments and promotes cross-linking into thick bundles. Has an actin-stabilizing activity. The actin regulatory activities are not regulated by pH and [Ca(2+)]. This chain is LIM domain-containing protein WLIM2a, found in Arabidopsis thaliana (Mouse-ear cress).